An 81-amino-acid polypeptide reads, in one-letter code: MDPLIAAASVVAAALAVGLGAIGPGIGQGNAAGQAVEGIARQPEAEGKIRGTLLLSLAFMEALTIYGLVVSLVLLFANPFA.

A run of 2 helical transmembrane segments spans residues 3-23 (PLIAAASVVAAALAVGLGAIG) and 57-77 (LAFMEALTIYGLVVSLVLLFA).

The protein belongs to the ATPase C chain family. In terms of assembly, F-type ATPases have 2 components, F(1) - the catalytic core - and F(0) - the membrane proton channel. F(1) has five subunits: alpha(3), beta(3), gamma(1), delta(1), epsilon(1). F(0) has four main subunits: a(1), b(1), b'(1) and c(10-14). The alpha and beta chains form an alternating ring which encloses part of the gamma chain. F(1) is attached to F(0) by a central stalk formed by the gamma and epsilon chains, while a peripheral stalk is formed by the delta, b and b' chains.

It is found in the cellular thylakoid membrane. F(1)F(0) ATP synthase produces ATP from ADP in the presence of a proton or sodium gradient. F-type ATPases consist of two structural domains, F(1) containing the extramembraneous catalytic core and F(0) containing the membrane proton channel, linked together by a central stalk and a peripheral stalk. During catalysis, ATP synthesis in the catalytic domain of F(1) is coupled via a rotary mechanism of the central stalk subunits to proton translocation. Its function is as follows. Key component of the F(0) channel; it plays a direct role in translocation across the membrane. A homomeric c-ring of between 10-14 subunits forms the central stalk rotor element with the F(1) delta and epsilon subunits. This chain is ATP synthase subunit c, found in Trichodesmium erythraeum (strain IMS101).